The sequence spans 341 residues: TERF1-interacting nuclear factor 2 (341 aa).

Residue alanine 2 is modified to N-acetylalanine. The short motif at 243-265 (HRFNLAPLGKRKSRSHWTSAKAC) is the TBM element. Positions 249 to 255 (PLGKRKS) match the Nuclear localization signal motif. The interval 283–341 (PAQDLSNPKSREEPGAASAASVGTEPVCTEEAKTPSRPLGKRALEETPPDSPAASRRTV) is disordered.

In terms of assembly, monomer. Found in a complex with POT1; TERF1 and TNKS1. Component of the shelterin complex (telosome) composed of TERF1, TERF2, TINF2, TERF2IP, ACD and POT1. Interacts with TERF1.

It is found in the nucleus. Its subcellular location is the chromosome. The protein localises to the telomere. Functionally, component of the shelterin complex (telosome) that is involved in the regulation of telomere length and protection. Shelterin associates with arrays of double-stranded TTAGGG repeats added by telomerase and protects chromosome ends; without its protective activity, telomeres are no longer hidden from the DNA damage surveillance and chromosome ends are inappropriately processed by DNA repair pathways. Plays a role in shelterin complex assembly. The chain is TERF1-interacting nuclear factor 2 (Tinf2) from Mus musculus (Mouse).